The chain runs to 117 residues: Ribosomal silencing factor RsfS (117 aa).

This sequence belongs to the Iojap/RsfS family. In terms of assembly, interacts with ribosomal protein uL14 (rplN).

The protein localises to the cytoplasm. Its function is as follows. Functions as a ribosomal silencing factor. Interacts with ribosomal protein uL14 (rplN), blocking formation of intersubunit bridge B8. Prevents association of the 30S and 50S ribosomal subunits and the formation of functional ribosomes, thus repressing translation. The protein is Ribosomal silencing factor RsfS of Halalkalibacterium halodurans (strain ATCC BAA-125 / DSM 18197 / FERM 7344 / JCM 9153 / C-125) (Bacillus halodurans).